The sequence spans 295 residues: Elongation factor Ts (295 aa).

An involved in Mg(2+) ion dislocation from EF-Tu region spans residues 79-82 (TDFV).

It belongs to the EF-Ts family.

Its subcellular location is the cytoplasm. Functionally, associates with the EF-Tu.GDP complex and induces the exchange of GDP to GTP. It remains bound to the aminoacyl-tRNA.EF-Tu.GTP complex up to the GTP hydrolysis stage on the ribosome. In Mycoplasma mycoides subsp. mycoides SC (strain CCUG 32753 / NCTC 10114 / PG1), this protein is Elongation factor Ts.